The chain runs to 199 residues: UPF0301 protein Rfer_1377 (199 aa).

Belongs to the UPF0301 (AlgH) family.

The sequence is that of UPF0301 protein Rfer_1377 from Albidiferax ferrireducens (strain ATCC BAA-621 / DSM 15236 / T118) (Rhodoferax ferrireducens).